The following is a 31-amino-acid chain: Cytochrome b6-f complex subunit 6 (31 aa).

A helical membrane pass occupies residues 4-26; that stretch reads LTSYFGFLLAALTITSALFIGLS.

It belongs to the PetL family. The 4 large subunits of the cytochrome b6-f complex are cytochrome b6, subunit IV (17 kDa polypeptide, PetD), cytochrome f and the Rieske protein, while the 4 small subunits are PetG, PetL, PetM and PetN. The complex functions as a dimer.

It is found in the plastid. It localises to the chloroplast thylakoid membrane. Its function is as follows. Component of the cytochrome b6-f complex, which mediates electron transfer between photosystem II (PSII) and photosystem I (PSI), cyclic electron flow around PSI, and state transitions. PetL is important for photoautotrophic growth as well as for electron transfer efficiency and stability of the cytochrome b6-f complex. In Aethionema cordifolium (Lebanon stonecress), this protein is Cytochrome b6-f complex subunit 6.